We begin with the raw amino-acid sequence, 367 residues long: MFRALITALFCFSGLALAGAGHAERIKDIGSFAGLRANQLTGYGIVVGLAGTGDDSLDYSTLGMKGVASRFGLQLPAGVNPALKNAAAVMITAELPAFAKPGQRLDITISALGKAKSLRGGTLIMAPLMGADGQIYAMAQGNLAVGGLGIDAADGSKLTINVPTAGRIPGGATVERSVDAGFATTPQLRFDLSEGDLTTSQRVAAAINGRLGQPIARSIDATTITIDAPQGAEVRTALMSRIENLEVDTAEAPARVVVNARTGTVVINGAVRIAPVAVTHGKMTVQVDEKPQIIQPQPFSRGQTAVQQSSAINVEQEARPMFEFNPGASLADIVKAVNAIGASPADLVAILEALKQAGAMKAELVVL.

An N-terminal signal peptide occupies residues 1-18 (MFRALITALFCFSGLALA).

The protein belongs to the FlgI family. The basal body constitutes a major portion of the flagellar organelle and consists of four rings (L,P,S, and M) mounted on a central rod.

The protein resides in the periplasm. The protein localises to the bacterial flagellum basal body. Functionally, assembles around the rod to form the L-ring and probably protects the motor/basal body from shearing forces during rotation. The protein is Flagellar P-ring protein of Rhizorhabdus wittichii (strain DSM 6014 / CCUG 31198 / JCM 15750 / NBRC 105917 / EY 4224 / RW1) (Sphingomonas wittichii).